A 309-amino-acid chain; its full sequence is 2-phospho-L-lactate transferase (309 aa).

D50 and R89 together coordinate 7,8-didemethyl-8-hydroxy-5-deazariboflavin.

Belongs to the CofD family. Homodimer. Requires Mg(2+) as cofactor.

The catalysed reaction is (2S)-lactyl-2-diphospho-5'-guanosine + 7,8-didemethyl-8-hydroxy-5-deazariboflavin = oxidized coenzyme F420-0 + GMP + H(+). It participates in cofactor biosynthesis; coenzyme F420 biosynthesis. Catalyzes the transfer of the 2-phospholactate moiety from (2S)-lactyl-2-diphospho-5'-guanosine to 7,8-didemethyl-8-hydroxy-5-deazariboflavin (FO) with the formation of oxidized coenzyme F420-0 and GMP. In Methanococcus maripaludis (strain DSM 14266 / JCM 13030 / NBRC 101832 / S2 / LL), this protein is 2-phospho-L-lactate transferase.